A 355-amino-acid polypeptide reads, in one-letter code: Guanine nucleotide-binding protein G(i) subunit alpha (355 aa).

The N-myristoyl glycine moiety is linked to residue glycine 2. Cysteine 3 is lipidated: S-palmitoyl cysteine. The G-alpha domain maps to 33–355 (REVKLLLLGA…KNNLKDCGLF (323 aa)). A G1 motif region spans residues 36–49 (KLLLLGAGESGKST). Residues 41 to 48 (GAGESGKS), 176 to 182 (LRTRVKT), 201 to 205 (DVGGQ), 270 to 273 (NKKD), and alanine 327 each bind GTP. Mg(2+) contacts are provided by serine 48 and threonine 182. Residues 174-182 (DVLRTRVKT) form a G2 motif region. Positions 197 to 206 (FKLFDVGGQR) are G3 motif. The G4 motif stretch occupies residues 266 to 273 (ILFLNKKD). The interval 325 to 330 (TCATDT) is G5 motif.

It belongs to the G-alpha family. G(i/o/t/z) subfamily. In terms of assembly, g proteins are composed of 3 units; alpha, beta and gamma. The alpha chain contains the guanine nucleotide binding site.

Guanine nucleotide-binding proteins (G proteins) are involved as modulators or transducers in various transmembrane signaling systems. In Homarus americanus (American lobster), this protein is Guanine nucleotide-binding protein G(i) subunit alpha.